The following is a 500-amino-acid chain: Glycerol kinase (500 aa).

Thr13 contributes to the ADP binding site. Residues Thr13, Thr14, and Ser15 each coordinate ATP. Position 13 (Thr13) interacts with sn-glycerol 3-phosphate. Residue Arg17 coordinates ADP. Sn-glycerol 3-phosphate contacts are provided by Arg83, Glu84, Tyr135, and Asp244. Positions 83, 84, 135, 244, and 245 each coordinate glycerol. 2 residues coordinate ADP: Thr266 and Gly309. Positions 266, 309, 313, and 410 each coordinate ATP. ADP contacts are provided by Gly410 and Asn414.

This sequence belongs to the FGGY kinase family.

It carries out the reaction glycerol + ATP = sn-glycerol 3-phosphate + ADP + H(+). The protein operates within polyol metabolism; glycerol degradation via glycerol kinase pathway; sn-glycerol 3-phosphate from glycerol: step 1/1. With respect to regulation, inhibited by fructose 1,6-bisphosphate (FBP). Key enzyme in the regulation of glycerol uptake and metabolism. Catalyzes the phosphorylation of glycerol to yield sn-glycerol 3-phosphate. In Burkholderia multivorans (strain ATCC 17616 / 249), this protein is Glycerol kinase.